The chain runs to 98 residues: Small ribosomal subunit protein bS20 (98 aa).

Basic residues predominate over residues 1 to 12; that stretch reads MAPRKPSKKVGP. The segment at 1–34 is disordered; that stretch reads MAPRKPSKKVGPQKRPSAEKRVITSKKKQLRNQS.

It belongs to the bacterial ribosomal protein bS20 family.

Binds directly to 16S ribosomal RNA. The polypeptide is Small ribosomal subunit protein bS20 (Chlamydia muridarum (strain MoPn / Nigg)).